A 163-amino-acid chain; its full sequence is Lipoprotein signal peptidase (163 aa).

4 helical membrane-spanning segments follow: residues 5–25, 37–57, 67–87, and 91–111; these read VLTFLGISFVIIVLDLTTKSL, IIPGLFNLVLVWNKGAAFGML, LMLVGSSIIAAVITAGYVFKS, and LSNLEVLSLALICGGSVGNLY. Active-site residues include D121 and D139. Residues 132–152 traverse the membrane as a helical segment; it reads WPAFNVADASITIGIALFIGY.

This sequence belongs to the peptidase A8 family.

The protein resides in the cell inner membrane. It carries out the reaction Release of signal peptides from bacterial membrane prolipoproteins. Hydrolyzes -Xaa-Yaa-Zaa-|-(S,diacylglyceryl)Cys-, in which Xaa is hydrophobic (preferably Leu), and Yaa (Ala or Ser) and Zaa (Gly or Ala) have small, neutral side chains.. The protein operates within protein modification; lipoprotein biosynthesis (signal peptide cleavage). Its function is as follows. This protein specifically catalyzes the removal of signal peptides from prolipoproteins. The sequence is that of Lipoprotein signal peptidase from Sulfurihydrogenibium sp. (strain YO3AOP1).